Reading from the N-terminus, the 67-residue chain is Large ribosomal subunit protein bL35 (67 aa).

Belongs to the bacterial ribosomal protein bL35 family.

This chain is Large ribosomal subunit protein bL35, found in Rhizobium johnstonii (strain DSM 114642 / LMG 32736 / 3841) (Rhizobium leguminosarum bv. viciae).